A 312-amino-acid polypeptide reads, in one-letter code: Glyoxylate/hydroxypyruvate reductase A (312 aa).

R227 is an active-site residue. The active-site Proton donor is H275.

This sequence belongs to the D-isomer specific 2-hydroxyacid dehydrogenase family. GhrA subfamily.

The protein localises to the cytoplasm. It catalyses the reaction glycolate + NADP(+) = glyoxylate + NADPH + H(+). It carries out the reaction (R)-glycerate + NAD(+) = 3-hydroxypyruvate + NADH + H(+). The catalysed reaction is (R)-glycerate + NADP(+) = 3-hydroxypyruvate + NADPH + H(+). Functionally, catalyzes the NADPH-dependent reduction of glyoxylate and hydroxypyruvate into glycolate and glycerate, respectively. The chain is Glyoxylate/hydroxypyruvate reductase A from Salmonella typhi.